Here is a 659-residue protein sequence, read N- to C-terminus: RNA polymerase II subunit A C-terminal domain phosphatase (659 aa).

The FCP1 homology domain occupies 139-303; sequence ITNRKLVLLV…KNSKEQMPVQ (165 aa). The region spanning 351–443 is the BRCT domain; the sequence is ERHKVLDGCV…LKADENLFQL (93 aa). A compositionally biased stretch (acidic residues) spans 484 to 504; it reads ALSDDEDDGDNEDEDDDGNDV. Residues 484-640 form a disordered region; sequence ALSDDEDDGD…PESDDDDEFE (157 aa). The segment covering 505 to 519 has biased composition (basic and acidic residues); that stretch reads GEDKGDENLEEKQEK. Over residues 529 to 538 the composition is skewed to polar residues; that stretch reads QNGSVENQSG. 3 stretches are compositionally biased toward acidic residues: residues 560 to 576, 596 to 607, and 616 to 640; these read MEDE…DDDT, ENEDDAVFDVDD, and IDEE…DEFE.

The protein resides in the nucleus. The enzyme catalyses O-phospho-L-seryl-[protein] + H2O = L-seryl-[protein] + phosphate. It carries out the reaction O-phospho-L-threonyl-[protein] + H2O = L-threonyl-[protein] + phosphate. Functionally, during the late stages of oogenesis, dephosphorylates 'Ser-5' of the heptad repeats YSPTSPS in the C-terminal domain of the largest RNA polymerase II subunit ama-1. Similarly, dephosphorylates 'Ser-5' of ama-1 in early embryonic cells prior to the activation of the zygotic transcription program at the 4-cell embryonic stage. May dephosphorylate 'Ser-2' of the ama-1 heptad repeats YSPTSPS in embryonic somatic and germline cells. This is RNA polymerase II subunit A C-terminal domain phosphatase from Caenorhabditis elegans.